A 235-amino-acid chain; its full sequence is Small ribosomal subunit protein uS2 (235 aa).

The protein belongs to the universal ribosomal protein uS2 family.

The protein is Small ribosomal subunit protein uS2 of Synechococcus sp. (strain RCC307).